Here is a 689-residue protein sequence, read N- to C-terminus: Glycine--tRNA ligase beta subunit (689 aa).

It belongs to the class-II aminoacyl-tRNA synthetase family. In terms of assembly, tetramer of two alpha and two beta subunits.

It localises to the cytoplasm. It carries out the reaction tRNA(Gly) + glycine + ATP = glycyl-tRNA(Gly) + AMP + diphosphate. The protein is Glycine--tRNA ligase beta subunit of Escherichia coli O7:K1 (strain IAI39 / ExPEC).